Reading from the N-terminus, the 139-residue chain is Large ribosomal subunit protein uL16c (139 aa).

Residues 1–17 (MLSPKKTKFRKQHRGRM) show a composition bias toward basic residues. The segment at 1–23 (MLSPKKTKFRKQHRGRMKGSASK) is disordered.

The protein belongs to the universal ribosomal protein uL16 family. Part of the 50S ribosomal subunit.

Its subcellular location is the plastid. It is found in the chloroplast. This is Large ribosomal subunit protein uL16c from Pyropia yezoensis (Susabi-nori).